The chain runs to 316 residues: Ornithine carbamoyltransferase (316 aa).

Residues 59–62 (STRT), Gln-86, Arg-110, and 137–140 (HPCQ) each bind carbamoyl phosphate. Residues Asn-168, Asp-232, and 236–237 (SM) each bind L-ornithine. Carbamoyl phosphate contacts are provided by residues 273–274 (CL) and Arg-301.

Belongs to the aspartate/ornithine carbamoyltransferase superfamily. OTCase family.

The protein localises to the cytoplasm. The catalysed reaction is carbamoyl phosphate + L-ornithine = L-citrulline + phosphate + H(+). The protein operates within amino-acid biosynthesis; L-arginine biosynthesis; L-arginine from L-ornithine and carbamoyl phosphate: step 1/3. Its function is as follows. Reversibly catalyzes the transfer of the carbamoyl group from carbamoyl phosphate (CP) to the N(epsilon) atom of ornithine (ORN) to produce L-citrulline. In Listeria monocytogenes serotype 4b (strain F2365), this protein is Ornithine carbamoyltransferase.